The chain runs to 439 residues: Xylose isomerase (439 aa).

Active-site residues include His-101 and Asp-104. Glu-232, Glu-268, His-271, Asp-296, Asp-307, Asp-309, and Asp-339 together coordinate Mg(2+).

Belongs to the xylose isomerase family. In terms of assembly, homotetramer. Mg(2+) is required as a cofactor.

The protein resides in the cytoplasm. It carries out the reaction alpha-D-xylose = alpha-D-xylulofuranose. This chain is Xylose isomerase, found in Haemophilus influenzae (strain PittGG).